Consider the following 209-residue polypeptide: dITP/XTP pyrophosphatase (209 aa).

Residue 7–12 (SSHGYK) participates in substrate binding. Asp-70 serves as the catalytic Proton acceptor. Position 70 (Asp-70) interacts with Mg(2+). Substrate is bound by residues Ser-71, 154 to 157 (FGYD), Lys-177, and 182 to 183 (HR).

The protein belongs to the HAM1 NTPase family. In terms of assembly, homodimer. The cofactor is Mg(2+).

The catalysed reaction is XTP + H2O = XMP + diphosphate + H(+). It catalyses the reaction dITP + H2O = dIMP + diphosphate + H(+). It carries out the reaction ITP + H2O = IMP + diphosphate + H(+). In terms of biological role, pyrophosphatase that catalyzes the hydrolysis of nucleoside triphosphates to their monophosphate derivatives, with a high preference for the non-canonical purine nucleotides XTP (xanthosine triphosphate), dITP (deoxyinosine triphosphate) and ITP. Seems to function as a house-cleaning enzyme that removes non-canonical purine nucleotides from the nucleotide pool, thus preventing their incorporation into DNA/RNA and avoiding chromosomal lesions. This is dITP/XTP pyrophosphatase from Chlamydia muridarum (strain MoPn / Nigg).